The chain runs to 219 residues: Histone H1.4 (219 aa).

Positions 1–15 (MSETAPAAPAAPAPA) are enriched in low complexity. The segment at 1–41 (MSETAPAAPAAPAPAEKTPIKKKARKAAGGAKRKASGPPVS) is disordered. The residue at position 2 (Ser-2) is an N-acetylserine. Ser-2 is subject to Phosphoserine. Position 17 is an N6-acetyllysine (Lys-17). Thr-18 carries the phosphothreonine modification. The segment covering 20–35 (IKKKARKAAGGAKRKA) has biased composition (basic residues). Lys-26 is modified (N6-acetyllysine; alternate). Lys-26 is modified (N6-methyllysine; alternate). Lys-34 bears the N6-(beta-hydroxybutyryl)lysine; alternate mark. The residue at position 34 (Lys-34) is an N6-succinyllysine; alternate. The residue at position 36 (Ser-36) is a Phosphoserine. Residues 36 to 109 (SGPPVSELIT…GASGSFKLNK (74 aa)) enclose the H15 domain. Lys-52 is modified (N6-(beta-hydroxybutyryl)lysine). Residue Arg-54 is modified to Citrulline. N6-(beta-hydroxybutyryl)lysine is present on residues Lys-64, Lys-85, Lys-90, and Lys-106. The disordered stretch occupies residues 92-219 (TLVQTKGTGA…KPKKTAAKKK (128 aa)). Residues 119 to 140 (KAKKAGAAKAKKPAGAAKKPKK) show a composition bias toward basic residues. Thr-146 is modified (phosphothreonine). 2 stretches are compositionally biased toward basic residues: residues 149–160 (KSTKKTPKKAKK) and 168–185 (KKAKSPKKAKATKAKKAP). Position 150 is an ADP-ribosylserine (Ser-150). Phosphoserine is present on Ser-187. Residues 192-219 (RAVKPKAAKPKTSKPKAAKPKKTAAKKK) are compositionally biased toward basic residues.

Belongs to the histone H1/H5 family. In terms of processing, H1 histones are progressively phosphorylated during the cell cycle, becoming maximally phosphorylated during late G2 phase and M phase, and being dephosphorylated sharply thereafter. Acetylated at Lys-26. Deacetylated at Lys-26 by SIRT1. Post-translationally, citrullination at Arg-54 (H1R54ci) by PADI4 takes place within the DNA-binding site of H1 and results in its displacement from chromatin and global chromatin decondensation, thereby promoting pluripotency and stem cell maintenance. In terms of processing, ADP-ribosylated on Ser-150 in response to DNA damage.

Its subcellular location is the nucleus. The protein resides in the chromosome. Functionally, histone H1 protein binds to linker DNA between nucleosomes forming the macromolecular structure known as the chromatin fiber. Histones H1 are necessary for the condensation of nucleosome chains into higher-order structured fibers. Also acts as a regulator of individual gene transcription through chromatin remodeling, nucleosome spacing and DNA methylation. The polypeptide is Histone H1.4 (Rattus norvegicus (Rat)).